Consider the following 513-residue polypeptide: ATP synthase subunit alpha (513 aa).

169-176 (GDRQTGKT) serves as a coordination point for ATP.

The protein belongs to the ATPase alpha/beta chains family. F-type ATPases have 2 components, CF(1) - the catalytic core - and CF(0) - the membrane proton channel. CF(1) has five subunits: alpha(3), beta(3), gamma(1), delta(1), epsilon(1). CF(0) has three main subunits: a(1), b(2) and c(9-12). The alpha and beta chains form an alternating ring which encloses part of the gamma chain. CF(1) is attached to CF(0) by a central stalk formed by the gamma and epsilon chains, while a peripheral stalk is formed by the delta and b chains.

It is found in the cell inner membrane. The catalysed reaction is ATP + H2O + 4 H(+)(in) = ADP + phosphate + 5 H(+)(out). Its function is as follows. Produces ATP from ADP in the presence of a proton gradient across the membrane. The alpha chain is a regulatory subunit. This chain is ATP synthase subunit alpha, found in Pseudoalteromonas translucida (strain TAC 125).